Consider the following 275-residue polypeptide: 3-methyl-2-oxobutanoate hydroxymethyltransferase (275 aa).

Asp-44 and Asp-83 together coordinate Mg(2+). 3-methyl-2-oxobutanoate-binding positions include 44–45, Asp-83, and Lys-113; that span reads DS. Glu-115 is a binding site for Mg(2+). Glu-182 (proton acceptor) is an active-site residue.

Belongs to the PanB family. As to quaternary structure, homodecamer; pentamer of dimers. Mg(2+) serves as cofactor.

The protein resides in the cytoplasm. It catalyses the reaction 3-methyl-2-oxobutanoate + (6R)-5,10-methylene-5,6,7,8-tetrahydrofolate + H2O = 2-dehydropantoate + (6S)-5,6,7,8-tetrahydrofolate. Its pathway is cofactor biosynthesis; (R)-pantothenate biosynthesis; (R)-pantoate from 3-methyl-2-oxobutanoate: step 1/2. Functionally, catalyzes the reversible reaction in which hydroxymethyl group from 5,10-methylenetetrahydrofolate is transferred onto alpha-ketoisovalerate to form ketopantoate. This chain is 3-methyl-2-oxobutanoate hydroxymethyltransferase, found in Clostridioides difficile (strain 630) (Peptoclostridium difficile).